We begin with the raw amino-acid sequence, 547 residues long: CTP synthase (547 aa).

The tract at residues 1 to 267 (MTKFVFVTGG…AQQTLALLNL (267 aa)) is amidoligase domain. S13 provides a ligand contact to CTP. S13 contacts UTP. Residues 14 to 19 (SIGKGI) and D71 contribute to the ATP site. Mg(2+) contacts are provided by D71 and E141. CTP-binding positions include 148-150 (DIE), 188-193 (KTKPTQ), and K224. UTP contacts are provided by residues 188 to 193 (KTKPTQ) and K224. Residues 292 to 534 (EIALVGKYVQ…VKAAVDHYST (243 aa)) form the Glutamine amidotransferase type-1 domain. Residue G354 participates in L-glutamine binding. The Nucleophile; for glutamine hydrolysis role is filled by C381. L-glutamine contacts are provided by residues 382-385 (LGMQ), E405, and R462. Residues H507 and E509 contribute to the active site.

The protein belongs to the CTP synthase family. As to quaternary structure, homotetramer.

It catalyses the reaction UTP + L-glutamine + ATP + H2O = CTP + L-glutamate + ADP + phosphate + 2 H(+). The catalysed reaction is L-glutamine + H2O = L-glutamate + NH4(+). It carries out the reaction UTP + NH4(+) + ATP = CTP + ADP + phosphate + 2 H(+). It participates in pyrimidine metabolism; CTP biosynthesis via de novo pathway; CTP from UDP: step 2/2. Its activity is regulated as follows. Allosterically activated by GTP, when glutamine is the substrate; GTP has no effect on the reaction when ammonia is the substrate. The allosteric effector GTP functions by stabilizing the protein conformation that binds the tetrahedral intermediate(s) formed during glutamine hydrolysis. Inhibited by the product CTP, via allosteric rather than competitive inhibition. Catalyzes the ATP-dependent amination of UTP to CTP with either L-glutamine or ammonia as the source of nitrogen. Regulates intracellular CTP levels through interactions with the four ribonucleotide triphosphates. The polypeptide is CTP synthase (Rippkaea orientalis (strain PCC 8801 / RF-1) (Cyanothece sp. (strain PCC 8801))).